Consider the following 113-residue polypeptide: Protein AaeX (113 aa).

A run of 2 helical transmembrane segments spans residues 3 to 23 (LLPV…EMIL) and 43 to 63 (FVWH…YLIS).

Belongs to the AaeX family.

It is found in the cell membrane. This chain is Protein AaeX, found in Sodalis glossinidius (strain morsitans).